The following is a 210-amino-acid chain: MKGKFIVLEGLEGAGKTTALHTVVEQLRSLGITDLVFTREPGGTPLAEKLRQLIKHETEEPVTDKAELLMLYAARIQLVENVIKPALAAGKWVIGDRHDLSSQAYQGGGRGLDRHFMQTLKDSVLGGFEPDFTLYLDIEPAEGLARARGRGELDRIEQAGLDFFNRTRTRYLELVRDNPKAVVINARQNIERVTADIQSAVKKFVESQHG.

ATP is bound at residue G10–T17.

The protein belongs to the thymidylate kinase family.

The catalysed reaction is dTMP + ATP = dTDP + ADP. In terms of biological role, phosphorylation of dTMP to form dTDP in both de novo and salvage pathways of dTTP synthesis. The sequence is that of Thymidylate kinase from Actinobacillus succinogenes (strain ATCC 55618 / DSM 22257 / CCUG 43843 / 130Z).